Reading from the N-terminus, the 238-residue chain is 2,3,4,5-tetrahydropyridine-2,6-dicarboxylate N-acetyltransferase (238 aa).

This sequence belongs to the transferase hexapeptide repeat family. DapH subfamily.

It carries out the reaction (S)-2,3,4,5-tetrahydrodipicolinate + acetyl-CoA + H2O = L-2-acetamido-6-oxoheptanedioate + CoA. It functions in the pathway amino-acid biosynthesis; L-lysine biosynthesis via DAP pathway; LL-2,6-diaminopimelate from (S)-tetrahydrodipicolinate (acetylase route): step 1/3. In terms of biological role, catalyzes the transfer of an acetyl group from acetyl-CoA to tetrahydrodipicolinate. The protein is 2,3,4,5-tetrahydropyridine-2,6-dicarboxylate N-acetyltransferase of Thermotoga neapolitana (strain ATCC 49049 / DSM 4359 / NBRC 107923 / NS-E).